We begin with the raw amino-acid sequence, 450 residues long: Phosphoglucosamine mutase (450 aa).

Residue serine 100 is the Phosphoserine intermediate of the active site. Residues serine 100, aspartate 240, aspartate 242, and aspartate 244 each coordinate Mg(2+). Serine 100 carries the post-translational modification Phosphoserine.

The protein belongs to the phosphohexose mutase family. The cofactor is Mg(2+). In terms of processing, activated by phosphorylation.

The catalysed reaction is alpha-D-glucosamine 1-phosphate = D-glucosamine 6-phosphate. In terms of biological role, catalyzes the conversion of glucosamine-6-phosphate to glucosamine-1-phosphate. This is Phosphoglucosamine mutase from Desulforudis audaxviator (strain MP104C).